Reading from the N-terminus, the 431-residue chain is STE20-related kinase adapter protein alpha (431 aa).

A phosphoserine mark is found at serine 2 and serine 46. Disordered stretches follow at residues 32–52 (EQPP…SIAS) and 314–344 (PSRS…SHPY). In terms of domain architecture, Protein kinase spans 69–379 (YELLTIIGKG…ASTLLNHSFF (311 aa)). Threonine 419 carries the post-translational modification Phosphothreonine; by LKB1.

Belongs to the protein kinase superfamily. STE Ser/Thr protein kinase family. STE20 subfamily. In terms of assembly, component of a trimeric complex composed of STK11/LKB1, STRAD (STRADA or STRADB) and CAB39/MO25 (CAB39/MO25alpha or CAB39L/MO25beta): the complex tethers STK11/LKB1 in the cytoplasm and stimulates its catalytic activity.

It is found in the nucleus. The protein localises to the cytoplasm. Functionally, pseudokinase which, in complex with CAB39/MO25 (CAB39/MO25alpha or CAB39L/MO25beta), binds to and activates STK11/LKB1. Adopts a closed conformation typical of active protein kinases and binds STK11/LKB1 as a pseudosubstrate, promoting conformational change of STK11/LKB1 in an active conformation. This is STE20-related kinase adapter protein alpha (Strada) from Mus musculus (Mouse).